An 872-amino-acid polypeptide reads, in one-letter code: Oxidation resistance protein 1 (872 aa).

Positions 1-86 (MSVTNLSWLK…QKKTLDKKDG (86 aa)) are disordered. Residues 63 to 86 (RRSELKRFYTIDTGQKKTLDKKDG) show a composition bias toward basic and acidic residues. Serine 90 is subject to Phosphoserine. The LysM domain occupies 98-141 (VKYTVESRDSLNSIALKFDTTPNELVQLNKLFSRAVVTGQVLYV). Threonine 118 carries the phosphothreonine modification. Residues 150–168 (VESSPSLSPISPLSPTSSE) are compositionally biased toward low complexity. The segment at 150-187 (VESSPSLSPISPLSPTSSEAELEKTTTPDVVHPKEPTP) is disordered. The segment covering 170–184 (ELEKTTTPDVVHPKE) has biased composition (basic and acidic residues). 3 positions are modified to phosphoserine: serine 201, serine 202, and serine 204. The GRAM domain maps to 212 to 268 (EKFLKINCRYITSSKGTVSGVLLVTPNNIMFDPHKTDPLVQENGCEEYGIMCPMEEV). 3 positions are modified to phosphoserine: serine 294, serine 334, and serine 336. The disordered stretch occupies residues 314–338 (SRIRDAANDSASTAPRSTEESLSED). Position 341 is a phosphothreonine (threonine 341). Serine 346 and serine 496 each carry phosphoserine. A mediates oxidative antimutator activity region spans residues 549–576 (RRHRLHKFLCLRVRKPMRKTFVSQASAT). The region spanning 711–872 (HLLLPDQIIK…IQDIEIWAFK (162 aa)) is the TLDc domain.

Belongs to the OXR1 family.

Its subcellular location is the mitochondrion. Its function is as follows. May be involved in protection from oxidative damage. This is Oxidation resistance protein 1 (OXR1) from Bos taurus (Bovine).